The following is a 114-amino-acid chain: Phosphoribosyl-AMP cyclohydrolase (114 aa).

Residue aspartate 80 coordinates Mg(2+). Cysteine 81 is a binding site for Zn(2+). Positions 82 and 84 each coordinate Mg(2+). The Zn(2+) site is built by cysteine 97 and cysteine 104.

This sequence belongs to the PRA-CH family. In terms of assembly, homodimer. Mg(2+) is required as a cofactor. It depends on Zn(2+) as a cofactor.

It is found in the cytoplasm. The catalysed reaction is 1-(5-phospho-beta-D-ribosyl)-5'-AMP + H2O = 1-(5-phospho-beta-D-ribosyl)-5-[(5-phospho-beta-D-ribosylamino)methylideneamino]imidazole-4-carboxamide. It participates in amino-acid biosynthesis; L-histidine biosynthesis; L-histidine from 5-phospho-alpha-D-ribose 1-diphosphate: step 3/9. Catalyzes the hydrolysis of the adenine ring of phosphoribosyl-AMP. This chain is Phosphoribosyl-AMP cyclohydrolase, found in Rhodococcus jostii (strain RHA1).